A 348-amino-acid chain; its full sequence is Lipooligosaccharide heptosyltransferase 2 (348 aa).

It belongs to the glycosyltransferase 9 family.

The catalysed reaction is an L-alpha-D-Hep-(1-&gt;5)-[alpha-Kdo-(2-&gt;4)]-alpha-Kdo-(2-&gt;6)-lipid A + ADP-L-glycero-beta-D-manno-heptose = an L-alpha-D-Hep-(1-&gt;3)-L-alpha-D-Hep-(1-&gt;5)-[alpha-Kdo-(2-&gt;4)]-alpha-Kdo-(2-&gt;6)-lipid A + ADP + H(+). It functions in the pathway bacterial outer membrane biogenesis; LOS core biosynthesis. Glycosyltransferase involved in the biosynthesis of the core oligosaccharide region of lipooligosaccharide (LOS). Catalyzes the addition of a heptose unit to the heptosyl-Kdo2-lipid A module. In Haemophilus ducreyi (strain 35000HP / ATCC 700724), this protein is Lipooligosaccharide heptosyltransferase 2.